Reading from the N-terminus, the 328-residue chain is tRNA uridine(34) hydroxylase (328 aa).

One can recognise a Rhodanese domain in the interval 130–224 (LDKDTVVLDT…YGKDPEVQGE (95 aa)). The active-site Cysteine persulfide intermediate is the cysteine 184.

It belongs to the TrhO family.

It catalyses the reaction uridine(34) in tRNA + AH2 + O2 = 5-hydroxyuridine(34) in tRNA + A + H2O. Functionally, catalyzes oxygen-dependent 5-hydroxyuridine (ho5U) modification at position 34 in tRNAs. This Streptococcus pneumoniae (strain Taiwan19F-14) protein is tRNA uridine(34) hydroxylase.